Consider the following 249-residue polypeptide: General transcription factor IIF subunit 2 (249 aa).

Residue Ala2 is modified to N-acetylalanine. N6-acetyllysine is present on residues Lys22, Lys33, and Lys137. Position 142 is a phosphoserine (Ser142). DNA contacts are provided by Gly227 and His229. Ser248 bears the Phosphoserine mark.

This sequence belongs to the TFIIF beta subunit family. In terms of assembly, heterodimer of an alpha and a beta subunit. Interacts with HTATSF1 and GPBP1. Interacts with URI1. Interacts with GTF2B (via N-terminus); this interaction is inhibited in presence of GTF2F1. Part of TBP-based Pol II pre-initiation complex (PIC), in which Pol II core assembles with general transcription factors and other specific initiation factors including GTF2E1, GTF2E2, GTF2F1, GTF2F2, TCEA1, ERCC2, ERCC3, GTF2H2, GTF2H3, GTF2H4, GTF2H5, GTF2A1, GTF2A2, GTF2B and TBP; this large multi-subunit PIC complex mediates DNA unwinding and targets Pol II core to the transcription start site where the first phosphodiester bond forms.

The protein resides in the nucleus. In terms of biological role, TFIIF is a general transcription initiation factor that binds to RNA polymerase II and helps to recruit it to the initiation complex in collaboration with TFIIB. This chain is General transcription factor IIF subunit 2 (GTF2F2), found in Homo sapiens (Human).